We begin with the raw amino-acid sequence, 141 residues long: Protein C19orf12 homolog (141 aa).

The helical transmembrane segment at 37–57 (GLAFAGGLIGGPLGIAVGGAV) threads the bilayer.

Belongs to the C19orf12 family.

The protein resides in the mitochondrion. Its subcellular location is the mitochondrion membrane. The protein localises to the endoplasmic reticulum. It is found in the cytoplasm. It localises to the cytosol. This Danio rerio (Zebrafish) protein is Protein C19orf12 homolog.